Reading from the N-terminus, the 206-residue chain is 3-isopropylmalate dehydratase small subunit (206 aa).

The protein belongs to the LeuD family. LeuD type 1 subfamily. Heterodimer of LeuC and LeuD.

It carries out the reaction (2R,3S)-3-isopropylmalate = (2S)-2-isopropylmalate. The protein operates within amino-acid biosynthesis; L-leucine biosynthesis; L-leucine from 3-methyl-2-oxobutanoate: step 2/4. In terms of biological role, catalyzes the isomerization between 2-isopropylmalate and 3-isopropylmalate, via the formation of 2-isopropylmaleate. This chain is 3-isopropylmalate dehydratase small subunit, found in Leptospira borgpetersenii serovar Hardjo-bovis (strain JB197).